We begin with the raw amino-acid sequence, 396 residues long: Homoserine O-acetyltransferase (396 aa).

Positions 53-370 constitute an AB hydrolase-1 domain; sequence NAILVCHALT…DRGHDAFLLE (318 aa). Ser158 acts as the Nucleophile in catalysis. Residue Arg228 coordinates substrate. Catalysis depends on residues Asp331 and His364. Substrate is bound at residue Asp365.

The protein belongs to the AB hydrolase superfamily. MetX family. As to quaternary structure, homodimer.

Its subcellular location is the cytoplasm. It carries out the reaction L-homoserine + acetyl-CoA = O-acetyl-L-homoserine + CoA. It functions in the pathway amino-acid biosynthesis; L-methionine biosynthesis via de novo pathway; O-acetyl-L-homoserine from L-homoserine: step 1/1. In terms of biological role, transfers an acetyl group from acetyl-CoA to L-homoserine, forming acetyl-L-homoserine. This is Homoserine O-acetyltransferase from Gluconobacter oxydans (strain 621H) (Gluconobacter suboxydans).